A 347-amino-acid polypeptide reads, in one-letter code: Ribosomal RNA large subunit methyltransferase M (347 aa).

S-adenosyl-L-methionine is bound by residues Ser-184, 217–220 (APGG), Asp-236, Asp-256, and Asp-272. Residue Lys-301 is the Proton acceptor of the active site.

The protein belongs to the class I-like SAM-binding methyltransferase superfamily. RNA methyltransferase RlmE family. RlmM subfamily. As to quaternary structure, monomer.

It localises to the cytoplasm. The catalysed reaction is cytidine(2498) in 23S rRNA + S-adenosyl-L-methionine = 2'-O-methylcytidine(2498) in 23S rRNA + S-adenosyl-L-homocysteine + H(+). Catalyzes the 2'-O-methylation at nucleotide C2498 in 23S rRNA. The chain is Ribosomal RNA large subunit methyltransferase M from Xanthomonas oryzae pv. oryzae (strain MAFF 311018).